The following is a 158-amino-acid chain: NAD(P)H-quinone oxidoreductase subunit J, chloroplastic (158 aa).

This sequence belongs to the complex I 30 kDa subunit family. NDH is composed of at least 16 different subunits, 5 of which are encoded in the nucleus.

The protein localises to the plastid. The protein resides in the chloroplast thylakoid membrane. The catalysed reaction is a plastoquinone + NADH + (n+1) H(+)(in) = a plastoquinol + NAD(+) + n H(+)(out). The enzyme catalyses a plastoquinone + NADPH + (n+1) H(+)(in) = a plastoquinol + NADP(+) + n H(+)(out). Its function is as follows. NDH shuttles electrons from NAD(P)H:plastoquinone, via FMN and iron-sulfur (Fe-S) centers, to quinones in the photosynthetic chain and possibly in a chloroplast respiratory chain. The immediate electron acceptor for the enzyme in this species is believed to be plastoquinone. Couples the redox reaction to proton translocation, and thus conserves the redox energy in a proton gradient. The polypeptide is NAD(P)H-quinone oxidoreductase subunit J, chloroplastic (Solanum lycopersicum (Tomato)).